Reading from the N-terminus, the 362-residue chain is Alpha-tubulin N-acetyltransferase (362 aa).

Residues 1–177 form the N-acetyltransferase domain; that stretch reads MQFGCNVAEA…NNFLMLDASI (177 aa). Acetyl-CoA is bound by residues 111 to 124 and 147 to 156; these read FYTHETVQRRGIGT and SPKLLAFLSK.

This sequence belongs to the acetyltransferase ATAT1 family.

The enzyme catalyses L-lysyl-[alpha-tubulin] + acetyl-CoA = N(6)-acetyl-L-lysyl-[alpha-tubulin] + CoA + H(+). Its function is as follows. Specifically acetylates 'Lys-40' in alpha-tubulin on the lumenal side of microtubules. Promotes microtubule destabilization and accelerates microtubule dynamics; this activity may be independent of acetylation activity. Acetylates alpha-tubulin with a slow enzymatic rate, due to a catalytic site that is not optimized for acetyl transfer. Enters the microtubule through each end and diffuses quickly throughout the lumen of microtubules. Acetylates only long/old microtubules because of its slow acetylation rate since it does not have time to act on dynamically unstable microtubules before the enzyme is released. The sequence is that of Alpha-tubulin N-acetyltransferase from Giardia intestinalis (strain ATCC 50803 / WB clone C6) (Giardia lamblia).